The primary structure comprises 641 residues: Phosphomethylpyrimidine synthase (641 aa).

Residues asparagine 221, methionine 250, tyrosine 279, histidine 315, 335 to 337, 376 to 379, and glutamate 415 contribute to the substrate site; these read SRG and DGLR. Histidine 419 is a Zn(2+) binding site. Tyrosine 442 lines the substrate pocket. Histidine 483 contributes to the Zn(2+) binding site. Residues cysteine 563, cysteine 566, and cysteine 571 each coordinate [4Fe-4S] cluster.

Belongs to the ThiC family. In terms of assembly, homodimer. The cofactor is [4Fe-4S] cluster.

It carries out the reaction 5-amino-1-(5-phospho-beta-D-ribosyl)imidazole + S-adenosyl-L-methionine = 4-amino-2-methyl-5-(phosphooxymethyl)pyrimidine + CO + 5'-deoxyadenosine + formate + L-methionine + 3 H(+). The protein operates within cofactor biosynthesis; thiamine diphosphate biosynthesis. Catalyzes the synthesis of the hydroxymethylpyrimidine phosphate (HMP-P) moiety of thiamine from aminoimidazole ribotide (AIR) in a radical S-adenosyl-L-methionine (SAM)-dependent reaction. The chain is Phosphomethylpyrimidine synthase from Rhodopseudomonas palustris (strain BisA53).